A 276-amino-acid chain; its full sequence is Hydroxyethylthiazole kinase (276 aa).

ATP-binding residues include arginine 126 and serine 172. Glycine 199 is a binding site for substrate.

This sequence belongs to the Thz kinase family. The cofactor is Mg(2+).

It carries out the reaction 5-(2-hydroxyethyl)-4-methylthiazole + ATP = 4-methyl-5-(2-phosphooxyethyl)-thiazole + ADP + H(+). It participates in cofactor biosynthesis; thiamine diphosphate biosynthesis; 4-methyl-5-(2-phosphoethyl)-thiazole from 5-(2-hydroxyethyl)-4-methylthiazole: step 1/1. Its function is as follows. Catalyzes the phosphorylation of the hydroxyl group of 4-methyl-5-beta-hydroxyethylthiazole (THZ). The chain is Hydroxyethylthiazole kinase from Burkholderia pseudomallei (strain 1106a).